Reading from the N-terminus, the 287-residue chain is mRNA-capping enzyme regulatory subunit OPG124 (287 aa).

This sequence belongs to the orthopoxvirus mRNA-capping enzyme regulatory subunit family. In terms of assembly, interacts with the catalytic subunit OPG113.

The protein localises to the virion. Its function is as follows. Regulatory subunit of the mRNA cap enzyme which stabilizes the catalytic subunit and enhances its methyltransferase activity through an allosteric mechanism. Heterodimeric mRNA capping enzyme catalyzes the linkage of a N7-methyl-guanosine moiety to the first transcribed nucleotide (cap 0 structure), whereas the methyltransferase OPG102 is responsible for a second methylation at the 2'-O position of the ribose (cap 1 structure). Also involved in early viral gene transcription termination and intermediate viral gene transcription initiation. Early gene transcription termination requires the termination factor VTF, the DNA-dependent ATPase NPH-I/OPG123 and the RAP94/OPG109 subunit of the viral RNA polymerase, as well as the presence of a specific termination motif. Binds, together with RAP94/OPG109, to the termination motif 5'-UUUUUNU-3' in the nascent early mRNA. The polypeptide is mRNA-capping enzyme regulatory subunit OPG124 (OPG124) (Bos taurus (Bovine)).